Here is a 431-residue protein sequence, read N- to C-terminus: Putative serine/threonine-protein kinase A (431 aa).

Positions 20 to 279 constitute a Protein kinase domain; that stretch reads YLNKGIVGLG…VREIFQIPYI (260 aa). ATP-binding positions include 26 to 34 and lysine 49; that span reads VGLGSYGEA. Aspartate 147 acts as the Proton acceptor in catalysis. Residues 331–429 form the PH domain; it reads DVTHRGHVNK…WVHAIQRGIG (99 aa).

The protein belongs to the protein kinase superfamily. Ser/Thr protein kinase family.

It carries out the reaction L-seryl-[protein] + ATP = O-phospho-L-seryl-[protein] + ADP + H(+). The enzyme catalyses L-threonyl-[protein] + ATP = O-phospho-L-threonyl-[protein] + ADP + H(+). The polypeptide is Putative serine/threonine-protein kinase A (NRKA) (Trypanosoma brucei brucei).